A 317-amino-acid chain; its full sequence is tRNA dimethylallyltransferase (317 aa).

14 to 21 contributes to the ATP binding site; that stretch reads GPTAVGKT. 16-21 lines the substrate pocket; it reads TAVGKT. The segment at 39–42 is interaction with substrate tRNA; it reads DSMQ.

The protein belongs to the IPP transferase family. In terms of assembly, monomer. Mg(2+) is required as a cofactor.

The enzyme catalyses adenosine(37) in tRNA + dimethylallyl diphosphate = N(6)-dimethylallyladenosine(37) in tRNA + diphosphate. Functionally, catalyzes the transfer of a dimethylallyl group onto the adenine at position 37 in tRNAs that read codons beginning with uridine, leading to the formation of N6-(dimethylallyl)adenosine (i(6)A). In Bacillus cereus (strain ATCC 14579 / DSM 31 / CCUG 7414 / JCM 2152 / NBRC 15305 / NCIMB 9373 / NCTC 2599 / NRRL B-3711), this protein is tRNA dimethylallyltransferase.